We begin with the raw amino-acid sequence, 313 residues long: Ribosomal RNA small subunit methyltransferase H (313 aa).

S-adenosyl-L-methionine-binding positions include 35–37 (GGH), Asp55, Phe79, Asp101, and Gln108.

It belongs to the methyltransferase superfamily. RsmH family.

It localises to the cytoplasm. It catalyses the reaction cytidine(1402) in 16S rRNA + S-adenosyl-L-methionine = N(4)-methylcytidine(1402) in 16S rRNA + S-adenosyl-L-homocysteine + H(+). Specifically methylates the N4 position of cytidine in position 1402 (C1402) of 16S rRNA. This is Ribosomal RNA small subunit methyltransferase H from Salmonella typhi.